A 1193-amino-acid polypeptide reads, in one-letter code: DNA-directed RNA polymerase subunit beta (1193 aa).

Over residues 1149–1162 (EEEIEMRDLEDEED) the composition is skewed to acidic residues. A disordered region spans residues 1149-1193 (EEEIEMRDLEDEEDAKQADGLALSGDEEPEETASADVERDVVTKE). Residues 1184–1193 (DVERDVVTKE) show a composition bias toward basic and acidic residues.

This sequence belongs to the RNA polymerase beta chain family. As to quaternary structure, RNAP is composed of a core of 2 alpha, a beta and a beta' subunit. The core is associated with a delta subunit, and at least one of epsilon or omega. When a sigma factor is associated with the core the holoenzyme is formed, which can initiate transcription.

The catalysed reaction is RNA(n) + a ribonucleoside 5'-triphosphate = RNA(n+1) + diphosphate. Functionally, DNA-dependent RNA polymerase catalyzes the transcription of DNA into RNA using the four ribonucleoside triphosphates as substrates. The protein is DNA-directed RNA polymerase subunit beta of Bacillus subtilis (strain 168).